We begin with the raw amino-acid sequence, 396 residues long: UDP-galactose translocator (396 aa).

A run of 10 helical transmembrane segments spans residues alanine 3–leucine 23, tyrosine 37–alanine 57, phenylalanine 65–leucine 85, leucine 97–valine 117, threonine 140–leucine 160, tryptophan 169–glycine 189, glycine 200–phenylalanine 220, leucine 238–valine 258, proline 269–valine 289, and leucine 315–valine 335. Positions proline 358 to aspartate 379 are disordered. The short motif at lysine 392–serine 396 is the ER retention motif element.

The protein belongs to the nucleotide-sugar transporter family. SLC35A subfamily. As to quaternary structure, interacts with SLC35A3; the interaction is reduced in the presence of SLC35A4. Found in a complex with SLC35A3 and SLC35A4. In terms of assembly, interacts with B4GALT4.

It localises to the endoplasmic reticulum membrane. The protein resides in the golgi apparatus membrane. The catalysed reaction is UMP(out) + UDP-alpha-D-galactose(in) = UMP(in) + UDP-alpha-D-galactose(out). The enzyme catalyses UDP-N-acetyl-alpha-D-galactosamine(in) + UMP(out) = UDP-N-acetyl-alpha-D-galactosamine(out) + UMP(in). It carries out the reaction UMP(out) + UDP-alpha-D-glucose(in) = UMP(in) + UDP-alpha-D-glucose(out). It catalyses the reaction UMP(out) + UDP-N-acetyl-alpha-D-glucosamine(in) = UMP(in) + UDP-N-acetyl-alpha-D-glucosamine(out). The catalysed reaction is UDP-alpha-D-galactose(in) + AMP(out) = UDP-alpha-D-galactose(out) + AMP(in). The enzyme catalyses UDP-alpha-D-galactose(in) + CMP(out) = UDP-alpha-D-galactose(out) + CMP(in). It carries out the reaction UDP-N-acetyl-alpha-D-galactosamine(out) + UDP-alpha-D-galactose(in) = UDP-N-acetyl-alpha-D-galactosamine(in) + UDP-alpha-D-galactose(out). It catalyses the reaction UDP-N-acetyl-alpha-D-glucosamine(out) + UDP-alpha-D-galactose(in) = UDP-N-acetyl-alpha-D-glucosamine(in) + UDP-alpha-D-galactose(out). The catalysed reaction is UDP-alpha-D-galactose(in) + UDP-alpha-D-glucose(out) = UDP-alpha-D-galactose(out) + UDP-alpha-D-glucose(in). The enzyme catalyses UMP(out) + CMP(in) = UMP(in) + CMP(out). It carries out the reaction UMP(out) + AMP(in) = UMP(in) + AMP(out). Transports uridine diphosphate galactose (UDP-galactose) from the cytosol into the Golgi apparatus, functioning as an antiporter that exchanges UDP-galactose for UMP. It is also able to exchange UDP-galactose for AMP and CMP, and to transport UDP-N-acetylgalactosamine (UDP-GalNAc) and other nucleotide sugars. As a provider of UDP-galactose to galactosyltransferases present in the Golgi apparatus, it is necessary for globotriaosylceramide/globoside (Gb3Cer) synthesis from lactosylceramide. This chain is UDP-galactose translocator, found in Homo sapiens (Human).